Consider the following 244-residue polypeptide: Ribonuclease HII (244 aa).

The RNase H type-2 domain maps to 31 to 222 (RLIAGVDEAG…VRLALQGREG (192 aa)). A divalent metal cation is bound by residues aspartate 37, glutamate 38, and aspartate 130.

This sequence belongs to the RNase HII family. Requires Mn(2+) as cofactor. Mg(2+) is required as a cofactor.

It is found in the cytoplasm. The catalysed reaction is Endonucleolytic cleavage to 5'-phosphomonoester.. Functionally, endonuclease that specifically degrades the RNA of RNA-DNA hybrids. This is Ribonuclease HII from Xanthomonas axonopodis pv. citri (strain 306).